A 1095-amino-acid chain; its full sequence is DNA-directed RNA polymerase subunit beta (1095 aa).

The tract at residues 1069-1095 (DLMQDVNPRRSTPSRPTYESLGKEYEE) is disordered.

This sequence belongs to the RNA polymerase beta chain family. In terms of assembly, in cyanobacteria the RNAP catalytic core is composed of 2 alpha, 1 beta, 1 beta', 1 gamma and 1 omega subunit. When a sigma factor is associated with the core the holoenzyme is formed, which can initiate transcription.

It catalyses the reaction RNA(n) + a ribonucleoside 5'-triphosphate = RNA(n+1) + diphosphate. In terms of biological role, DNA-dependent RNA polymerase catalyzes the transcription of DNA into RNA using the four ribonucleoside triphosphates as substrates. The protein is DNA-directed RNA polymerase subunit beta of Prochlorococcus marinus (strain NATL2A).